Reading from the N-terminus, the 100-residue chain is Urease subunit gamma (100 aa).

It belongs to the urease gamma subunit family. As to quaternary structure, heterotrimer of UreA (gamma), UreB (beta) and UreC (alpha) subunits. Three heterotrimers associate to form the active enzyme.

It is found in the cytoplasm. The enzyme catalyses urea + 2 H2O + H(+) = hydrogencarbonate + 2 NH4(+). It functions in the pathway nitrogen metabolism; urea degradation; CO(2) and NH(3) from urea (urease route): step 1/1. This Cupriavidus metallidurans (strain ATCC 43123 / DSM 2839 / NBRC 102507 / CH34) (Ralstonia metallidurans) protein is Urease subunit gamma.